Reading from the N-terminus, the 198-residue chain is MTVLTIYREDLPEQPLTQTTDAAEIAALLAQQGLRFERWPAQVELADDATPEQILAAYATEVDRVKTEGGYITVDAVSLRPDHPDRAALRQKFLAEHIHSEDEVRFFVAGQGLFSLHLGDHVYALLCTQNDWISVPAGTRHWFDMGSQPYFTALRFFNNPRRLGRSVYRQRHRQSVPAPALNSGSERDNFILSLALAC.

4 residues coordinate Fe(2+): histidine 97, histidine 99, glutamate 103, and histidine 141. Residues histidine 97, histidine 99, glutamate 103, and histidine 141 each contribute to the Ni(2+) site.

It belongs to the acireductone dioxygenase (ARD) family. Monomer. It depends on Fe(2+) as a cofactor. Ni(2+) is required as a cofactor.

It catalyses the reaction 1,2-dihydroxy-5-(methylsulfanyl)pent-1-en-3-one + O2 = 3-(methylsulfanyl)propanoate + CO + formate + 2 H(+). The enzyme catalyses 1,2-dihydroxy-5-(methylsulfanyl)pent-1-en-3-one + O2 = 4-methylsulfanyl-2-oxobutanoate + formate + 2 H(+). The protein operates within amino-acid biosynthesis; L-methionine biosynthesis via salvage pathway; L-methionine from S-methyl-5-thio-alpha-D-ribose 1-phosphate: step 5/6. In terms of biological role, catalyzes 2 different reactions between oxygen and the acireductone 1,2-dihydroxy-3-keto-5-methylthiopentene (DHK-MTPene) depending upon the metal bound in the active site. Fe-containing acireductone dioxygenase (Fe-ARD) produces formate and 2-keto-4-methylthiobutyrate (KMTB), the alpha-ketoacid precursor of methionine in the methionine recycle pathway. Ni-containing acireductone dioxygenase (Ni-ARD) produces methylthiopropionate, carbon monoxide and formate, and does not lie on the methionine recycle pathway. This Synechococcus elongatus (strain ATCC 33912 / PCC 7942 / FACHB-805) (Anacystis nidulans R2) protein is Acireductone dioxygenase.